The chain runs to 176 residues: MFKGTTIIAVRKGDKVSVAGDGQITFGENTILKHGAKKIRRLYNGEVIVGFAGSVADALTLSQKFEEKLEQYGGNLKRAAVELAQEWRKDKILRKLEALLIAVDKKDTLLISGTGEVIEPDEDVIGIGSGGNYAMAAALALRYNTDLDTEDIAKKALEIASKICVYTNNNITVETL.

Residue Thr-5 is part of the active site. Residues Ser-161, Cys-164, and Thr-167 each coordinate Na(+).

It belongs to the peptidase T1B family. HslV subfamily. A double ring-shaped homohexamer of HslV is capped on each side by a ring-shaped HslU homohexamer. The assembly of the HslU/HslV complex is dependent on binding of ATP.

The protein localises to the cytoplasm. It catalyses the reaction ATP-dependent cleavage of peptide bonds with broad specificity.. Its activity is regulated as follows. Allosterically activated by HslU binding. Its function is as follows. Protease subunit of a proteasome-like degradation complex believed to be a general protein degrading machinery. This is ATP-dependent protease subunit HslV from Thermoanaerobacter pseudethanolicus (strain ATCC 33223 / 39E) (Clostridium thermohydrosulfuricum).